A 133-amino-acid chain; its full sequence is UPF0225 protein BP2036 (133 aa).

It belongs to the UPF0225 family.

In Bordetella pertussis (strain Tohama I / ATCC BAA-589 / NCTC 13251), this protein is UPF0225 protein BP2036.